A 392-amino-acid chain; its full sequence is Transcription factor GATA-4 (392 aa).

The disordered stretch occupies residues 75-113 (SSAYNPGTSHPPVSPRFTFSSSPPITAPSSREVSYSSPL). Over residues 91–113 (FTFSSSPPITAPSSREVSYSSPL) the composition is skewed to polar residues. 2 GATA-type zinc fingers span residues 184–208 (CVNCGAMSTPLWRRDGTGHYLCNAC) and 238–262 (CANCHTTTTTLWRRNAEGEPVCNAC). Disordered stretches follow at residues 279–339 (KEGI…HSNS) and 359–392 (MPSLKLSPQNHHSTFNPSPQANSKHDSWNNLVLA). Positions 284–293 (TRKRKPKNLS) are enriched in basic residues. A compositionally biased stretch (low complexity) spans 302-316 (SGSDSLTPSTSSTNS). Residues 364 to 380 (LSPQNHHSTFNPSPQAN) are compositionally biased toward polar residues.

As to expression, expressed at high levels in heart, small intestine, stomach, ovary, and liver. Found at much lower levels in lung, spleen, pancreas and skin.

It localises to the nucleus. In terms of biological role, transcriptional activator that binds to the consensus sequence 5'-AGATAG-3'. Associated with cardiac specification and can regulate cardiac-specific transcription during embryogenesis. Activates the expression of cardiac MHC-alpha in vivo. This chain is Transcription factor GATA-4 (gata4), found in Xenopus laevis (African clawed frog).